Reading from the N-terminus, the 73-residue chain is UPF0346 protein BLi02292/BL01432 (73 aa).

This sequence belongs to the UPF0346 family.

The chain is UPF0346 protein BLi02292/BL01432 from Bacillus licheniformis (strain ATCC 14580 / DSM 13 / JCM 2505 / CCUG 7422 / NBRC 12200 / NCIMB 9375 / NCTC 10341 / NRRL NRS-1264 / Gibson 46).